The primary structure comprises 202 residues: Endothelin-1 (202 aa).

An N-terminal signal peptide occupies residues 1–25 (MDYFPVIFSLLFVTFQGAPETAVLG). Residues 26–50 (AELSTGAENGVQSPPPSTPWRPRRS) constitute a propeptide that is removed on maturation. 2 cysteine pairs are disulfide-bonded: C53/C67 and C55/C63. A propeptide spanning residues 74–202 (VNTPERVVPY…DQKLTHNRAH (129 aa)) is cleaved from the precursor. The endothelin-like stretch occupies residues 110 to 124 (CQCAHQKDKKCWNFC).

Belongs to the endothelin/sarafotoxin family. Highest expression in the adult is in lung. Lower levels found in heart, kidney, brain and intestine. In the embryo, expressed in outer and inner pharyngeal arch surfaces. Also expressed in endothelium of dorsal aorta and arch arteries, and in epithelium of pharyngeal pouches.

Its subcellular location is the secreted. Endothelins are endothelium-derived vasoconstrictor peptides. Probable ligand for G-protein coupled receptors EDNRA and EDNRB which activates PTK2B, BCAR1, BCAR3 and, GTPases RAP1 and RHOA cascade in glomerular mesangial cells. Also binds the DEAR/FBXW7-AS1 receptor. Promotes mesenteric arterial wall remodeling via activation of ROCK signaling and subsequent colocalization of NFATC3 with F-actin filaments. NFATC3 then translocates to the nucleus where it subsequently promotes the transcription of the smooth muscle hypertrophy and differentiation marker ACTA2. This is Endothelin-1 (Edn1) from Mus musculus (Mouse).